The sequence spans 278 residues: Elongation factor Ts (278 aa).

Residues 82-85 are involved in Mg(2+) ion dislocation from EF-Tu; that stretch reads TDFV.

Belongs to the EF-Ts family.

It is found in the cytoplasm. In terms of biological role, associates with the EF-Tu.GDP complex and induces the exchange of GDP to GTP. It remains bound to the aminoacyl-tRNA.EF-Tu.GTP complex up to the GTP hydrolysis stage on the ribosome. The sequence is that of Elongation factor Ts from Streptomyces griseus subsp. griseus (strain JCM 4626 / CBS 651.72 / NBRC 13350 / KCC S-0626 / ISP 5235).